Consider the following 598-residue polypeptide: Membrane protein insertase YidC (598 aa).

The helical transmembrane segment at 7–27 threads the bilayer; the sequence is NYFIAIALSVLIVLGWQFLYM. Positions 37-76 are disordered; sequence AQEAQKAQQQTEQVQQPAAGGQTPAQTSGAAPSGQAAATA. Residues 40 to 76 are compositionally biased toward low complexity; sequence AQKAQQQTEQVQQPAAGGQTPAQTSGAAPSGQAAATA. The next 4 helical transmembrane spans lie at 377-397, 447-467, 492-512, and 538-558; these read FGVA…PLAS, WPVA…YITI, LFGL…WPLI, and WMPL…VIYW.

Belongs to the OXA1/ALB3/YidC family. Type 1 subfamily. As to quaternary structure, interacts with the Sec translocase complex via SecD. Specifically interacts with transmembrane segments of nascent integral membrane proteins during membrane integration.

It localises to the cell inner membrane. Required for the insertion and/or proper folding and/or complex formation of integral membrane proteins into the membrane. Involved in integration of membrane proteins that insert both dependently and independently of the Sec translocase complex, as well as at least some lipoproteins. Aids folding of multispanning membrane proteins. The chain is Membrane protein insertase YidC from Rhizobium johnstonii (strain DSM 114642 / LMG 32736 / 3841) (Rhizobium leguminosarum bv. viciae).